Reading from the N-terminus, the 689-residue chain is Glycine--tRNA ligase beta subunit (689 aa).

Belongs to the class-II aminoacyl-tRNA synthetase family. As to quaternary structure, tetramer of two alpha and two beta subunits.

The protein localises to the cytoplasm. It catalyses the reaction tRNA(Gly) + glycine + ATP = glycyl-tRNA(Gly) + AMP + diphosphate. This chain is Glycine--tRNA ligase beta subunit, found in Mannheimia succiniciproducens (strain KCTC 0769BP / MBEL55E).